The chain runs to 61 residues: Cytotoxin 3 (61 aa).

Intrachain disulfides connect C3-C22, C15-C39, C43-C54, and C55-C60.

It belongs to the three-finger toxin family. Short-chain subfamily. Type IB cytotoxin sub-subfamily. As to expression, expressed by the venom gland.

It localises to the secreted. This protein lyses red blood cells and has cardiotoxic and hypotensive activities. This is Cytotoxin 3 from Hemachatus haemachatus (Rinkhals).